A 95-amino-acid chain; its full sequence is Protein TusB (95 aa).

This sequence belongs to the DsrH/TusB family. Heterohexamer, formed by a dimer of trimers. The hexameric TusBCD complex contains 2 copies each of TusB, TusC and TusD. The TusBCD complex interacts with TusE.

Its subcellular location is the cytoplasm. Part of a sulfur-relay system required for 2-thiolation of 5-methylaminomethyl-2-thiouridine (mnm(5)s(2)U) at tRNA wobble positions. The polypeptide is Protein TusB (Escherichia coli (strain SMS-3-5 / SECEC)).